Here is a 430-residue protein sequence, read N- to C-terminus: Mitochondrial distribution and morphology protein 12 (430 aa).

Residues 1 to 430 (MSIDIDWERA…VYPSFWTFLI (430 aa)) enclose the SMP-LTD domain. Disordered stretches follow at residues 61–117 (DLSD…YESN), 177–276 (TPLG…RMRE), and 352–377 (MGPETAGGGGGGDTSEPNSSRRKPSS). The span at 69-82 (FYEDDDENFSDSSE) shows a compositional bias: acidic residues. The segment covering 85–96 (SPTREPVDRYGN) has biased composition (basic and acidic residues). 2 stretches are compositionally biased toward polar residues: residues 211–233 (SAQSRPSTANTGNTLPSRDSMSI) and 241–251 (ASQGMPNNQGQ). Residues 265-276 (PLDDTPPRRMRE) show a composition bias toward basic and acidic residues.

This sequence belongs to the MDM12 family. Component of the ER-mitochondria encounter structure (ERMES) or MDM complex, composed of MMM1, MDM10, MDM12 and MDM34. An MMM1 homodimer associates with one molecule of MDM12 on each side in a pairwise head-to-tail manner, and the SMP-LTD domains of MMM1 and MDM12 generate a continuous hydrophobic tunnel for phospholipid trafficking.

Its subcellular location is the mitochondrion outer membrane. It localises to the endoplasmic reticulum membrane. Component of the ERMES/MDM complex, which serves as a molecular tether to connect the endoplasmic reticulum (ER) and mitochondria. Components of this complex are involved in the control of mitochondrial shape and protein biogenesis, and function in nonvesicular lipid trafficking between the ER and mitochondria. MDM12 is required for the interaction of the ER-resident membrane protein MMM1 and the outer mitochondrial membrane-resident beta-barrel protein MDM10. The MDM12-MMM1 subcomplex functions in the major beta-barrel assembly pathway that is responsible for biogenesis of all mitochondrial outer membrane beta-barrel proteins, and acts in a late step after the SAM complex. The MDM10-MDM12-MMM1 subcomplex further acts in the TOM40-specific pathway after the action of the MDM12-MMM1 complex. Essential for establishing and maintaining the structure of mitochondria and maintenance of mtDNA nucleoids. The chain is Mitochondrial distribution and morphology protein 12 from Ajellomyces capsulatus (strain G186AR / H82 / ATCC MYA-2454 / RMSCC 2432) (Darling's disease fungus).